A 336-amino-acid polypeptide reads, in one-letter code: Vacuolar protein sorting-associated protein 26B (336 aa).

S302, S304, and S319 each carry phosphoserine.

It belongs to the VPS26 family. Component of the heterotrimeric retromer cargo-selective complex (CSC), also described as vacuolar protein sorting subcomplex (VPS), formed by VPS26 (VPS26A or VPS26B), VPS29 and VPS35. The CSC has a highly elongated structure with VPS26 and VPS29 binding independently at opposite distal ends of VPS35 as central platform. The CSC is believed to associate with variable sorting nexins to form functionally distinct retromer complex variants. The originally described SNX-BAR retromer is a pentamer containing the CSC and a heterodimeric membrane-deforming subcomplex formed between SNX1 or SNX2 and SNX5 or SNX6 (also called SNX-BAR subcomplex); the respective CSC and SNX-BAR subcomplexes associate with low affinity. The CSC associates with SNX3 to form a SNX3-retromer complex. The CSC associates with SNX27, the WASH complex and the SNX-BAR subcomplex to form the SNX27-retromer complex. Interacts with VPS29, VPS35, TBC1D5, GOLPH3, SNX27. In terms of tissue distribution, ubiquitously expressed in developing embryo and adult. Highly expressed in brain.

The protein localises to the cytoplasm. The protein resides in the membrane. It is found in the early endosome. It localises to the late endosome. In terms of biological role, acts as a component of the retromer cargo-selective complex (CSC). The CSC is believed to be the core functional component of retromer or respective retromer complex variants acting to prevent missorting of selected transmembrane cargo proteins into the lysosomal degradation pathway. The recruitment of the CSC to the endosomal membrane involves RAB7A and SNX3. The SNX-BAR retromer mediates retrograde transport of cargo proteins from endosomes to the trans-Golgi network (TGN) and is involved in endosome-to-plasma membrane transport for cargo protein recycling. The SNX3-retromer mediates the retrograde transport of WLS distinct from the SNX-BAR retromer pathway. The SNX27-retromer is believed to be involved in endosome-to-plasma membrane trafficking and recycling of a broad spectrum of cargo proteins. The CSC seems to act as recruitment hub for other proteins, such as the WASH complex and TBC1D5. May be involved in retrograde transport of SORT1 but not of IGF2R. Acts redundantly with VSP26A in SNX-27 mediated endocytic recycling of SLC2A1/GLUT1. The chain is Vacuolar protein sorting-associated protein 26B (Vps26b) from Mus musculus (Mouse).